Consider the following 164-residue polypeptide: Seripauperin-21 (164 aa).

Belongs to the SRP1/TIP1 family. Seripauperin subfamily.

In Saccharomyces cerevisiae (strain ATCC 204508 / S288c) (Baker's yeast), this protein is Seripauperin-21 (PAU21).